The primary structure comprises 322 residues: Phospho-N-acetylmuramoyl-pentapeptide-transferase (322 aa).

A run of 10 helical transmembrane segments spans residues I9–M29, T54–W74, V82–I102, I122–Y142, F145–G165, L176–F196, N200–F220, I227–M247, L255–F275, and V302–G322.

The protein belongs to the glycosyltransferase 4 family. MraY subfamily. Mg(2+) is required as a cofactor.

It localises to the cell membrane. The catalysed reaction is UDP-N-acetyl-alpha-D-muramoyl-L-alanyl-gamma-D-glutamyl-L-lysyl-D-alanyl-D-alanine + di-trans,octa-cis-undecaprenyl phosphate = Mur2Ac(oyl-L-Ala-gamma-D-Glu-L-Lys-D-Ala-D-Ala)-di-trans,octa-cis-undecaprenyl diphosphate + UMP. The protein operates within cell wall biogenesis; peptidoglycan biosynthesis. Catalyzes the initial step of the lipid cycle reactions in the biosynthesis of the cell wall peptidoglycan: transfers peptidoglycan precursor phospho-MurNAc-pentapeptide from UDP-MurNAc-pentapeptide onto the lipid carrier undecaprenyl phosphate, yielding undecaprenyl-pyrophosphoryl-MurNAc-pentapeptide, known as lipid I. The protein is Phospho-N-acetylmuramoyl-pentapeptide-transferase of Lactobacillus acidophilus (strain ATCC 700396 / NCK56 / N2 / NCFM).